The sequence spans 857 residues: Zinc finger protein 574 (857 aa).

14 consecutive C2H2-type zinc fingers follow at residues 15–37 (YVCS…QQSH), 58–80 (YQCL…QELH), 99–121 (YECP…RYTH), 206–228 (YKCS…QGTH), 297–319 (FSCG…QISH), 324–346 (FSCP…LKSH), 352–374 (YLCV…RRSH), 380–401 (FTCE…RRVH), 428–451 (FHCD…RFVH), 457–479 (HKCP…MLTH), 485–507 (YSCT…RLTH), 513–535 (YKCQ…QYVH), 541–563 (YKCN…QYHH), and 569–591 (YKCQ…QLGH). The C2H2-type 15; degenerate zinc-finger motif lies at 597–619 (HRCRECGTNFPSVQRLQDHRCSK). 5 C2H2-type zinc fingers span residues 628-651 (LECP…AAQH), 681-703 (LECS…RRIH), 709-731 (YPCP…RRLH), 737-759 (FKCD…KRIH), and 765-787 (HSCP…RKLH). The tract at residues 648-678 (AAQHSGNKRSNVSSGKGTPVLPRNKLKGGGG) is disordered. Polar residues predominate over residues 651 to 663 (HSGNKRSNVSSGK).

Belongs to the krueppel C2H2-type zinc-finger protein family.

The protein localises to the nucleus. Its function is as follows. May be involved in transcriptional regulation. The chain is Zinc finger protein 574 (znf574) from Xenopus tropicalis (Western clawed frog).